A 137-amino-acid chain; its full sequence is MGSKNSASVALFFTLNILFFALVSSTEKCPDPYKPKPKPTPKPTPTPYPSAGKCPRDALKLGVCADVLNLVHNVVIGSPPTLPCCSLLEGLVNLEAAVCLCTAIKANILGKNLNLPIALSLVLNNCGKQVPNGFECT.

The first 25 residues, 1–25 (MGSKNSASVALFFTLNILFFALVSS), serve as a signal peptide directing secretion. Positions 30–53 (PDPYKPKPKPTPKPTPTPYPSAGK) are disordered. Positions 38-48 (KPTPKPTPTPY) are enriched in pro residues. A helical membrane pass occupies residues 88–104 (LEGLVNLEAAVCLCTAI).

It localises to the membrane. In terms of biological role, may be connected with the initiation of embryogenesis or with the metabolic changes produced by the removal of auxins. The sequence is that of 14 kDa proline-rich protein DC2.15 from Daucus carota (Wild carrot).